The primary structure comprises 218 residues: Response regulator UvrY (218 aa).

Positions 3–119 constitute a Response regulatory domain; sequence NVLLVDDHEL…EVVSAIRSVY (117 aa). Position 54 is a 4-aspartylphosphate (Asp54). The HTH luxR-type domain occupies 143–208; the sequence is TESPFASLSE…ELTHLAIRHG (66 aa). Positions 167 to 186 form a DNA-binding region, H-T-H motif; the sequence is VNEISEQLNLSPKTVNSYRY.

Phosphorylated and activated by BarA.

It localises to the cytoplasm. In terms of biological role, member of the two-component regulatory system UvrY/BarA involved in the regulation of carbon metabolism via the CsrA/CsrB regulatory system. UvrY activates the transcription of the untranslated csrB RNA and of barA, in an autoregulatory loop. Mediates the effects of CsrA on csrB RNA by BarA-dependent and BarA-independent mechanisms. In Escherichia coli (strain K12), this protein is Response regulator UvrY (uvrY).